A 629-amino-acid chain; its full sequence is tRNA uridine 5-carboxymethylaminomethyl modification enzyme MnmG (629 aa).

Residues G13 to G18, V125, and S180 each bind FAD. G273–F287 lines the NAD(+) pocket. Q370 lines the FAD pocket.

It belongs to the MnmG family. Homodimer. Heterotetramer of two MnmE and two MnmG subunits. It depends on FAD as a cofactor.

Its subcellular location is the cytoplasm. Its function is as follows. NAD-binding protein involved in the addition of a carboxymethylaminomethyl (cmnm) group at the wobble position (U34) of certain tRNAs, forming tRNA-cmnm(5)s(2)U34. The protein is tRNA uridine 5-carboxymethylaminomethyl modification enzyme MnmG of Salmonella agona (strain SL483).